A 307-amino-acid chain; its full sequence is UDP-3-O-acyl-N-acetylglucosamine deacetylase (307 aa).

Positions 78, 241, and 245 each coordinate Zn(2+). Histidine 268 acts as the Proton donor in catalysis.

This sequence belongs to the LpxC family. The cofactor is Zn(2+).

It carries out the reaction a UDP-3-O-[(3R)-3-hydroxyacyl]-N-acetyl-alpha-D-glucosamine + H2O = a UDP-3-O-[(3R)-3-hydroxyacyl]-alpha-D-glucosamine + acetate. It functions in the pathway glycolipid biosynthesis; lipid IV(A) biosynthesis; lipid IV(A) from (3R)-3-hydroxytetradecanoyl-[acyl-carrier-protein] and UDP-N-acetyl-alpha-D-glucosamine: step 2/6. Catalyzes the hydrolysis of UDP-3-O-myristoyl-N-acetylglucosamine to form UDP-3-O-myristoylglucosamine and acetate, the committed step in lipid A biosynthesis. The protein is UDP-3-O-acyl-N-acetylglucosamine deacetylase of Variovorax paradoxus (strain S110).